The sequence spans 307 residues: Epimerase family protein ML0860 (307 aa).

It belongs to the NAD(P)-dependent epimerase/dehydratase family. SDR39U1 subfamily.

This chain is Epimerase family protein ML0860, found in Mycobacterium leprae (strain TN).